The sequence spans 231 residues: Orotidine 5'-phosphate decarboxylase (231 aa).

Substrate contacts are provided by residues Asp12, Lys34, 61-70, Thr116, Arg177, Gln186, Gly206, and Arg207; that span reads DMKLLDIDNT. Lys63 acts as the Proton donor in catalysis.

Belongs to the OMP decarboxylase family. Type 1 subfamily. As to quaternary structure, homodimer.

The catalysed reaction is orotidine 5'-phosphate + H(+) = UMP + CO2. The protein operates within pyrimidine metabolism; UMP biosynthesis via de novo pathway; UMP from orotate: step 2/2. In terms of biological role, catalyzes the decarboxylation of orotidine 5'-monophosphate (OMP) to uridine 5'-monophosphate (UMP). The chain is Orotidine 5'-phosphate decarboxylase from Allorhizobium ampelinum (strain ATCC BAA-846 / DSM 112012 / S4) (Agrobacterium vitis (strain S4)).